Here is a 142-residue protein sequence, read N- to C-terminus: Small ribosomal subunit protein bS6 (142 aa).

The segment covering 110 to 133 (NKKPSHAKEKHEKTEHTHSHHLEE) has biased composition (basic and acidic residues). A disordered region spans residues 110-142 (NKKPSHAKEKHEKTEHTHSHHLEEAESVGSHSE).

Belongs to the bacterial ribosomal protein bS6 family.

Its function is as follows. Binds together with bS18 to 16S ribosomal RNA. The sequence is that of Small ribosomal subunit protein bS6 from Helicobacter pylori (strain HPAG1).